Here is a 424-residue protein sequence, read N- to C-terminus: UPF0415 protein C7orf25 homolog (424 aa).

This sequence belongs to the UPF0415 family.

The sequence is that of UPF0415 protein C7orf25 homolog from Xenopus tropicalis (Western clawed frog).